The primary structure comprises 133 residues: Ribosome-binding factor A (133 aa).

Belongs to the RbfA family. In terms of assembly, monomer. Binds 30S ribosomal subunits, but not 50S ribosomal subunits or 70S ribosomes.

The protein localises to the cytoplasm. One of several proteins that assist in the late maturation steps of the functional core of the 30S ribosomal subunit. Associates with free 30S ribosomal subunits (but not with 30S subunits that are part of 70S ribosomes or polysomes). Required for efficient processing of 16S rRNA. May interact with the 5'-terminal helix region of 16S rRNA. The protein is Ribosome-binding factor A of Salmonella schwarzengrund (strain CVM19633).